The following is a 176-amino-acid chain: Xanthine-guanine phosphoribosyltransferase (176 aa).

5-phospho-alpha-D-ribose 1-diphosphate-binding positions include 51-52, Arg88, and 111-119; these read RG and DDLVDSGKT. Position 88 (Arg88) interacts with GMP. Residue Asp112 coordinates Mg(2+). Guanine is bound by residues Asp115 and Ile158. Xanthine is bound by residues Asp115 and Ile158. GMP contacts are provided by residues 115–119 and 157–158; these read DSGKT and WI.

It belongs to the purine/pyrimidine phosphoribosyltransferase family. XGPT subfamily. Homotetramer. Requires Mg(2+) as cofactor.

The protein localises to the cell inner membrane. The enzyme catalyses GMP + diphosphate = guanine + 5-phospho-alpha-D-ribose 1-diphosphate. The catalysed reaction is XMP + diphosphate = xanthine + 5-phospho-alpha-D-ribose 1-diphosphate. It carries out the reaction IMP + diphosphate = hypoxanthine + 5-phospho-alpha-D-ribose 1-diphosphate. It functions in the pathway purine metabolism; GMP biosynthesis via salvage pathway; GMP from guanine: step 1/1. The protein operates within purine metabolism; XMP biosynthesis via salvage pathway; XMP from xanthine: step 1/1. Purine salvage pathway enzyme that catalyzes the transfer of the ribosyl-5-phosphate group from 5-phospho-alpha-D-ribose 1-diphosphate (PRPP) to the N9 position of the 6-oxopurines guanine and xanthine to form the corresponding ribonucleotides GMP (guanosine 5'-monophosphate) and XMP (xanthosine 5'-monophosphate), with the release of PPi. To a lesser extent, also acts on hypoxanthine. The sequence is that of Xanthine-guanine phosphoribosyltransferase from Roseobacter denitrificans (strain ATCC 33942 / OCh 114) (Erythrobacter sp. (strain OCh 114)).